We begin with the raw amino-acid sequence, 89 residues long: Small ribosomal subunit protein uS17 (89 aa).

The protein belongs to the universal ribosomal protein uS17 family. Part of the 30S ribosomal subunit.

Functionally, one of the primary rRNA binding proteins, it binds specifically to the 5'-end of 16S ribosomal RNA. This is Small ribosomal subunit protein uS17 from Paracidovorax citrulli (strain AAC00-1) (Acidovorax citrulli).